The chain runs to 124 residues: uncharacterized protein (124 aa).

The GIY-YIG domain occupies 42 to 118; sequence DKGGIFMFYN…INTQHSKYNI (77 aa).

This is an uncharacterized protein from Bacillus subtilis (strain 168).